Consider the following 198-residue polypeptide: Autophagy-related protein 16 (198 aa).

The stretch at glutamate 24 to lysine 177 forms a coiled coil.

Belongs to the ATG16 family. In terms of assembly, homodimer. Part of the ATG5-ATG12/ATG16 complex. Several units of each may be present in this complex. Interacts directly with ATG12.

It localises to the preautophagosomal structure membrane. In terms of biological role, stabilizes the ATG5-ATG12 conjugate. The ATG5-ATG12/ATG16 complex is required for efficient promotion of ATG8-conjugation to phosphatidylethanolamine and ATG8 localization to the pre-autophagosomal structure (PAS). Also recruits ATG3 to the PAS. Involved in endoplasmic reticulum-specific autophagic process and is essential for the survival of cells subjected to severe ER stress. Autophagy is required for proper vegetative growth, asexual/sexual reproduction, and full virulence. Autophagy is particularly involved in the biosynthesis of deoxynivalenol (DON), an important virulence determinant. This chain is Autophagy-related protein 16, found in Gibberella zeae (strain ATCC MYA-4620 / CBS 123657 / FGSC 9075 / NRRL 31084 / PH-1) (Wheat head blight fungus).